The chain runs to 330 residues: Clavaminate synthase-like protein At3g21360 (330 aa).

An N-acetylalanine modification is found at alanine 2. Residues histidine 120, glutamate 122, and histidine 313 each contribute to the Fe cation site.

Requires Fe cation as cofactor.

This is Clavaminate synthase-like protein At3g21360 from Arabidopsis thaliana (Mouse-ear cress).